The primary structure comprises 549 residues: Glucose-6-phosphate isomerase (549 aa).

The active-site Proton donor is the glutamate 353. Residues histidine 384 and lysine 510 contribute to the active site.

The protein belongs to the GPI family.

Its subcellular location is the cytoplasm. It carries out the reaction alpha-D-glucose 6-phosphate = beta-D-fructose 6-phosphate. The protein operates within carbohydrate biosynthesis; gluconeogenesis. It functions in the pathway carbohydrate degradation; glycolysis; D-glyceraldehyde 3-phosphate and glycerone phosphate from D-glucose: step 2/4. Its function is as follows. Catalyzes the reversible isomerization of glucose-6-phosphate to fructose-6-phosphate. The polypeptide is Glucose-6-phosphate isomerase (Mycolicibacterium smegmatis (strain ATCC 700084 / mc(2)155) (Mycobacterium smegmatis)).